The primary structure comprises 500 residues: Cytochrome P450 71B34 (500 aa).

Residues 1-21 (MTNIWLLSLIFVICILVAVFN) traverse the membrane as a helical segment. Heme is bound at residue Cys440.

This sequence belongs to the cytochrome P450 family. The cofactor is heme.

It is found in the membrane. The chain is Cytochrome P450 71B34 (CYP71B34) from Arabidopsis thaliana (Mouse-ear cress).